We begin with the raw amino-acid sequence, 387 residues long: Alkanesulfonate monooxygenase (387 aa).

The protein belongs to the SsuD family.

The enzyme catalyses an alkanesulfonate + FMNH2 + O2 = an aldehyde + FMN + sulfite + H2O + 2 H(+). Catalyzes the desulfonation of aliphatic sulfonates. The protein is Alkanesulfonate monooxygenase of Ralstonia nicotianae (strain ATCC BAA-1114 / GMI1000) (Ralstonia solanacearum).